The primary structure comprises 950 residues: 2-oxoglutarate dehydrogenase E1 component (950 aa).

The protein belongs to the alpha-ketoglutarate dehydrogenase family. As to quaternary structure, homodimer. Part of the 2-oxoglutarate dehydrogenase (OGDH) complex composed of E1 (2-oxoglutarate dehydrogenase), E2 (dihydrolipoamide succinyltransferase) and E3 (dihydrolipoamide dehydrogenase); the complex contains multiple copies of the three enzymatic components (E1, E2 and E3). Requires thiamine diphosphate as cofactor.

The enzyme catalyses N(6)-[(R)-lipoyl]-L-lysyl-[protein] + 2-oxoglutarate + H(+) = N(6)-[(R)-S(8)-succinyldihydrolipoyl]-L-lysyl-[protein] + CO2. Functionally, E1 component of the 2-oxoglutarate dehydrogenase (OGDH) complex which catalyzes the decarboxylation of 2-oxoglutarate, the first step in the conversion of 2-oxoglutarate to succinyl-CoA and CO(2). The polypeptide is 2-oxoglutarate dehydrogenase E1 component (Geobacillus kaustophilus (strain HTA426)).